A 182-amino-acid chain; its full sequence is uncharacterized protein (182 aa).

4 helical membrane passes run 19–39 (LFGI…SIVS), 51–71 (IYLV…VVFI), 87–107 (IFTV…IELF), and 118–138 (CSPF…LAMC).

The protein resides in the membrane. This is an uncharacterized protein from Caenorhabditis elegans.